The primary structure comprises 83 residues: MTDSAKPEVSGLSFEKAVAELESIVARLERGDVALDESIEIYERGEALKKHCETLLSAAENRIEKIRLDRAGKPQGVEPLDGA.

This sequence belongs to the XseB family. Heterooligomer composed of large and small subunits.

The protein resides in the cytoplasm. The catalysed reaction is Exonucleolytic cleavage in either 5'- to 3'- or 3'- to 5'-direction to yield nucleoside 5'-phosphates.. In terms of biological role, bidirectionally degrades single-stranded DNA into large acid-insoluble oligonucleotides, which are then degraded further into small acid-soluble oligonucleotides. This chain is Exodeoxyribonuclease 7 small subunit, found in Rhizobium leguminosarum bv. trifolii (strain WSM2304).